Reading from the N-terminus, the 347-residue chain is Dual-specificity RNA methyltransferase RlmN (347 aa).

E93 acts as the Proton acceptor in catalysis. Residues 99-327 (DEGRNTLCIS…VITRDSRGSD (229 aa)) form the Radical SAM core domain. The cysteines at positions 106 and 332 are disulfide-linked. [4Fe-4S] cluster contacts are provided by C113, C117, and C120. S-adenosyl-L-methionine contacts are provided by residues 158-159 (GE), S190, 213-215 (SLN), and N289. The active-site S-methylcysteine intermediate is the C332.

Belongs to the radical SAM superfamily. RlmN family. It depends on [4Fe-4S] cluster as a cofactor.

The protein resides in the cytoplasm. It catalyses the reaction adenosine(2503) in 23S rRNA + 2 reduced [2Fe-2S]-[ferredoxin] + 2 S-adenosyl-L-methionine = 2-methyladenosine(2503) in 23S rRNA + 5'-deoxyadenosine + L-methionine + 2 oxidized [2Fe-2S]-[ferredoxin] + S-adenosyl-L-homocysteine. The catalysed reaction is adenosine(37) in tRNA + 2 reduced [2Fe-2S]-[ferredoxin] + 2 S-adenosyl-L-methionine = 2-methyladenosine(37) in tRNA + 5'-deoxyadenosine + L-methionine + 2 oxidized [2Fe-2S]-[ferredoxin] + S-adenosyl-L-homocysteine. In terms of biological role, specifically methylates position 2 of adenine 2503 in 23S rRNA and position 2 of adenine 37 in tRNAs. m2A2503 modification seems to play a crucial role in the proofreading step occurring at the peptidyl transferase center and thus would serve to optimize ribosomal fidelity. In Pelobacter propionicus (strain DSM 2379 / NBRC 103807 / OttBd1), this protein is Dual-specificity RNA methyltransferase RlmN.